Here is a 98-residue protein sequence, read N- to C-terminus: Large ribosomal subunit protein uL23 (98 aa).

Belongs to the universal ribosomal protein uL23 family. Part of the 50S ribosomal subunit. Contacts protein L29, and trigger factor when it is bound to the ribosome.

Its function is as follows. One of the early assembly proteins it binds 23S rRNA. One of the proteins that surrounds the polypeptide exit tunnel on the outside of the ribosome. Forms the main docking site for trigger factor binding to the ribosome. The protein is Large ribosomal subunit protein uL23 of Streptococcus equi subsp. equi (strain 4047).